A 269-amino-acid chain; its full sequence is 4-hydroxy-tetrahydrodipicolinate reductase (269 aa).

Gly11 to Met16 contacts NAD(+). Residue Lys39 participates in NADP(+) binding. NAD(+) is bound by residues Gly101–Thr103 and Ala125–Phe128. The active-site Proton donor/acceptor is His158. His159 lines the (S)-2,3,4,5-tetrahydrodipicolinate pocket. The Proton donor role is filled by Lys162. A (S)-2,3,4,5-tetrahydrodipicolinate-binding site is contributed by Gly168 to Thr169.

The protein belongs to the DapB family. Homotetramer.

It localises to the cytoplasm. It catalyses the reaction (S)-2,3,4,5-tetrahydrodipicolinate + NAD(+) + H2O = (2S,4S)-4-hydroxy-2,3,4,5-tetrahydrodipicolinate + NADH + H(+). The enzyme catalyses (S)-2,3,4,5-tetrahydrodipicolinate + NADP(+) + H2O = (2S,4S)-4-hydroxy-2,3,4,5-tetrahydrodipicolinate + NADPH + H(+). Its pathway is amino-acid biosynthesis; L-lysine biosynthesis via DAP pathway; (S)-tetrahydrodipicolinate from L-aspartate: step 4/4. In terms of biological role, catalyzes the conversion of 4-hydroxy-tetrahydrodipicolinate (HTPA) to tetrahydrodipicolinate. This is 4-hydroxy-tetrahydrodipicolinate reductase from Buchnera aphidicola subsp. Acyrthosiphon pisum (strain 5A).